The sequence spans 218 residues: Thiopurine S-methyltransferase (218 aa).

S-adenosyl-L-methionine contacts are provided by tryptophan 10, leucine 45, glutamate 66, and arginine 123.

This sequence belongs to the class I-like SAM-binding methyltransferase superfamily. TPMT family.

It localises to the cytoplasm. It carries out the reaction S-adenosyl-L-methionine + a thiopurine = S-adenosyl-L-homocysteine + a thiopurine S-methylether.. This is Thiopurine S-methyltransferase from Xanthomonas campestris pv. campestris (strain 8004).